The sequence spans 365 residues: 3-isopropylmalate dehydrogenase (365 aa).

Residue 78–91 participates in NAD(+) binding; the sequence is GPKWDTLPAEERPE. Residues arginine 99, arginine 109, arginine 138, and aspartate 227 each coordinate substrate. The Mg(2+) site is built by aspartate 227, aspartate 251, and aspartate 255. An NAD(+)-binding site is contributed by 285-297; that stretch reads GSAPDIAGKNIAN.

It belongs to the isocitrate and isopropylmalate dehydrogenases family. LeuB type 1 subfamily. Homodimer. Mg(2+) is required as a cofactor. The cofactor is Mn(2+).

The protein resides in the cytoplasm. It catalyses the reaction (2R,3S)-3-isopropylmalate + NAD(+) = 4-methyl-2-oxopentanoate + CO2 + NADH. Its pathway is amino-acid biosynthesis; L-leucine biosynthesis; L-leucine from 3-methyl-2-oxobutanoate: step 3/4. In terms of biological role, catalyzes the oxidation of 3-carboxy-2-hydroxy-4-methylpentanoate (3-isopropylmalate) to 3-carboxy-4-methyl-2-oxopentanoate. The product decarboxylates to 4-methyl-2 oxopentanoate. This chain is 3-isopropylmalate dehydrogenase, found in Syntrophotalea carbinolica (strain DSM 2380 / NBRC 103641 / GraBd1) (Pelobacter carbinolicus).